The following is a 275-amino-acid chain: Phosphonoacetaldehyde hydrolase (275 aa).

D15 (nucleophile) is an active-site residue. D15 and A17 together coordinate Mg(2+). Residue K56 is the Schiff-base intermediate with substrate of the active site. Residue D189 participates in Mg(2+) binding.

This sequence belongs to the HAD-like hydrolase superfamily. PhnX family. Homodimer. Mg(2+) is required as a cofactor.

It catalyses the reaction phosphonoacetaldehyde + H2O = acetaldehyde + phosphate + H(+). In terms of biological role, involved in phosphonate degradation. The chain is Phosphonoacetaldehyde hydrolase from Pseudomonas fluorescens (strain Pf0-1).